A 419-amino-acid chain; its full sequence is Gamma-glutamyl phosphate reductase (419 aa).

This sequence belongs to the gamma-glutamyl phosphate reductase family.

The protein resides in the cytoplasm. It catalyses the reaction L-glutamate 5-semialdehyde + phosphate + NADP(+) = L-glutamyl 5-phosphate + NADPH + H(+). The protein operates within amino-acid biosynthesis; L-proline biosynthesis; L-glutamate 5-semialdehyde from L-glutamate: step 2/2. Its function is as follows. Catalyzes the NADPH-dependent reduction of L-glutamate 5-phosphate into L-glutamate 5-semialdehyde and phosphate. The product spontaneously undergoes cyclization to form 1-pyrroline-5-carboxylate. The chain is Gamma-glutamyl phosphate reductase from Nitratidesulfovibrio vulgaris (strain ATCC 29579 / DSM 644 / CCUG 34227 / NCIMB 8303 / VKM B-1760 / Hildenborough) (Desulfovibrio vulgaris).